The following is a 254-amino-acid chain: Dolichol-phosphate mannosyltransferase subunit 1 (254 aa).

GDP-alpha-D-mannose is bound by residues P25, Y27, E29, V56, D58, D111, A112, D113, R140, and R227. Position 113 (D113) interacts with Mg(2+). Mn(2+) is bound at residue D113.

It belongs to the glycosyltransferase 2 family. In terms of assembly, component of the dolichol-phosphate mannose (DPM) synthase complex composed of dpm1, dpm2 and dpm3. It depends on Mg(2+) as a cofactor. Mn(2+) is required as a cofactor. Requires Ca(2+) as cofactor.

It is found in the endoplasmic reticulum. It catalyses the reaction a di-trans,poly-cis-dolichyl phosphate + GDP-alpha-D-mannose = a di-trans,poly-cis-dolichyl beta-D-mannosyl phosphate + GDP. Its pathway is protein modification; protein glycosylation. Functionally, transfers mannose from GDP-mannose to dolichol monophosphate to form dolichol phosphate mannose (Dol-P-Man) which is the mannosyl donor in pathways leading to N-glycosylation, glycosyl phosphatidylinositol membrane anchoring, and O-mannosylation of proteins; catalytic subunit of the dolichol-phosphate mannose (DPM) synthase complex. In Dictyostelium discoideum (Social amoeba), this protein is Dolichol-phosphate mannosyltransferase subunit 1 (dpm1).